Reading from the N-terminus, the 198-residue chain is Small ribosomal subunit protein uS4 (198 aa).

The interval 26 to 45 is disordered; the sequence is LKKRPYAPGQHGQRRSKLSN. Positions 91-154 constitute an S4 RNA-binding domain; sequence SRLDNVVYRL…KNLTIVKEAL (64 aa).

Belongs to the universal ribosomal protein uS4 family. Part of the 30S ribosomal subunit. Contacts protein S5. The interaction surface between S4 and S5 is involved in control of translational fidelity.

Its function is as follows. One of the primary rRNA binding proteins, it binds directly to 16S rRNA where it nucleates assembly of the body of the 30S subunit. In terms of biological role, with S5 and S12 plays an important role in translational accuracy. In Acholeplasma laidlawii (strain PG-8A), this protein is Small ribosomal subunit protein uS4.